The following is a 412-amino-acid chain: Palmitoyl-acyl carrier protein thioesterase, chloroplastic (412 aa).

Composition is skewed to polar residues over residues 1-19 (MVAT…SSLD) and 27-40 (IGST…SAPN). The transit peptide at 1-49 (MVATSATSSFFPVPSSSLDPNGKGNKIGSTNLAGLNSAPNSGRMKVKPN) directs the protein to the chloroplast. Positions 1 to 64 (MVATSATSSF…KINGKKVGLP (64 aa)) are disordered. Active-site residues include N315, H317, and C352.

This sequence belongs to the acyl-ACP thioesterase family. In terms of tissue distribution, highly expressed in flowers. Expressed in roots, leaves, stems, siliques and seeds.

It is found in the plastid. Its subcellular location is the chloroplast. It carries out the reaction hexadecanoyl-[ACP] + H2O = hexadecanoate + holo-[ACP] + H(+). Functionally, plays an essential role in chain termination during de novo fatty acid synthesis. Possesses high thioesterase activity for palmitoyl-ACP versus other acyl-ACPs. Substrate preference is 16:0 &gt; 18:1 &gt; 18:0 &gt; 16:1. Plays an essential role in the supply of saturated fatty acids necessary for plant growth and seed development. Contributes to 16:0 production particularly in flowers. May be involved in the synthesis of long chain fatty acid. The chain is Palmitoyl-acyl carrier protein thioesterase, chloroplastic (FATB) from Arabidopsis thaliana (Mouse-ear cress).